The primary structure comprises 350 residues: Zinc finger protein 367 (350 aa).

Positions 104–151 are disordered; that stretch reads SGLRGRGAPPPAASASAAASGGEDEEEASSPDSGHLKDGIRRGRPRAD. Residues 137-151 are compositionally biased toward basic and acidic residues; the sequence is GHLKDGIRRGRPRAD. 2 consecutive C2H2-type zinc fingers follow at residues 167–189 and 195–219; these read IRCN…KRTH and YLCD…QRLH. The segment at 290-327 is disordered; sequence KGKLVQKADQEQQDPLEYLQSDEEDDEKRGAQRRLQEQ. A coiled-coil region spans residues 308 to 342; that stretch reads LQSDEEDDEKRGAQRRLQEQRERLHGALALIELAN. Serine 310 is subject to Phosphoserine. Residues 316–327 show a composition bias toward basic and acidic residues; it reads EKRGAQRRLQEQ.

This sequence belongs to the krueppel C2H2-type zinc-finger protein family.

Its subcellular location is the nucleus. Its function is as follows. Transcriptional activator. Isoform 1 may be involved in transcriptional activation of erythroid genes. This Homo sapiens (Human) protein is Zinc finger protein 367 (ZNF367).